Here is a 139-residue protein sequence, read N- to C-terminus: ATP synthase epsilon chain (139 aa).

It belongs to the ATPase epsilon chain family. F-type ATPases have 2 components, CF(1) - the catalytic core - and CF(0) - the membrane proton channel. CF(1) has five subunits: alpha(3), beta(3), gamma(1), delta(1), epsilon(1). CF(0) has three main subunits: a, b and c.

The protein localises to the cell inner membrane. In terms of biological role, produces ATP from ADP in the presence of a proton gradient across the membrane. This is ATP synthase epsilon chain from Salmonella arizonae (strain ATCC BAA-731 / CDC346-86 / RSK2980).